A 326-amino-acid chain; its full sequence is MKENFWSTLPRPFFILAPMEDVTDIVFRHVVSEAARPDVFFTEFTNTESYCHPEGIHSVRGRLTFSDDEQPMVAHIWGDKPEQFREMSIGLADMGFKGIDLNMGCPVANVAKKGKGSGLILRPETAAEIIQASKAGGLPVSVKTRLGYYDIDEWRDWLKHVFEQDIANLSIHLRTRKEMSKVDAHWELIEAIKTLRDEIAPNTLLTINGDIPDRQTGLELANKYGIDGIMIGRGIFHNPFAFEKEPREHSSKELLGLLRLHLSLFEKYDKDEARHFKSLRRFFKIYVRGIRGASELRHQLMNTQSIAEARELLDTFEARMDARSEV.

Pro18–Glu20 serves as a coordination point for FMN. Residue Cys105 is the Proton donor of the active site. FMN contacts are provided by residues Lys143, Asn208–Asp210, and Gly232–Arg233.

This sequence belongs to the Dus family. The cofactor is FMN.

It catalyses the reaction a 5,6-dihydrouridine in tRNA + NAD(+) = a uridine in tRNA + NADH + H(+). It carries out the reaction a 5,6-dihydrouridine in tRNA + NADP(+) = a uridine in tRNA + NADPH + H(+). In terms of biological role, catalyzes the synthesis of 5,6-dihydrouridine (D), a modified base found in the D-loop of most tRNAs, via the reduction of the C5-C6 double bond in target uridines. In Staphylococcus epidermidis (strain ATCC 35984 / DSM 28319 / BCRC 17069 / CCUG 31568 / BM 3577 / RP62A), this protein is Probable tRNA-dihydrouridine synthase (dus).